Consider the following 227-residue polypeptide: UPF0173 metal-dependent hydrolase BC_4613 (227 aa).

Belongs to the UPF0173 family.

The protein is UPF0173 metal-dependent hydrolase BC_4613 of Bacillus cereus (strain ATCC 14579 / DSM 31 / CCUG 7414 / JCM 2152 / NBRC 15305 / NCIMB 9373 / NCTC 2599 / NRRL B-3711).